An 82-amino-acid chain; its full sequence is Sulfur carrier protein TusA (82 aa).

Catalysis depends on cysteine 19, which acts as the Cysteine persulfide intermediate.

The protein belongs to the sulfur carrier protein TusA family.

Its subcellular location is the cytoplasm. In terms of biological role, sulfur carrier protein which probably makes part of a sulfur-relay system. In Photobacterium profundum (strain SS9), this protein is Sulfur carrier protein TusA.